Consider the following 117-residue polypeptide: uncharacterized protein (117 aa).

It localises to the cytoplasm. It is found in the nucleus. This is an uncharacterized protein from Schizosaccharomyces pombe (strain 972 / ATCC 24843) (Fission yeast).